The primary structure comprises 573 residues: Plasmepsin X (573 aa).

Positions 1-26 (MKRISPLNTLFYLSLFFSYTFKGLKC) are cleaved as a signal peptide. A propeptide spanning residues 27-221 (TRIYKIGTKA…SSIEKNFIAL (195 aa)) is cleaved from the precursor. Cystine bridges form between cysteine 39-cysteine 51 and cysteine 42-cysteine 48. The interval 167 to 211 (KGNKNFTNNENNSDNENNSDNENNSDNENNLDNENNLDNENNSDN) is disordered. Acidic residues predominate over residues 183 to 203 (NNSDNENNSDNENNLDNENNL). The 320-residue stretch at 248-567 (FVGELLVGTP…ESRPSMVGVA (320 aa)) folds into the Peptidase A1 domain. Aspartate 266 is a catalytic residue. The cysteines at positions 279 and 284 are disulfide-linked. Asparagine 334 is a glycosylation site (N-linked (GlcNAc...) asparagine). Cysteine 447 and cysteine 448 are disulfide-bonded. Residue aspartate 457 is part of the active site. A disulfide bridge links cysteine 482 with cysteine 521.

The protein belongs to the peptidase A1 family. In terms of processing, autocleaved into a p16 prodomain form and two mature forms p44 and p51.

The protein localises to the cytoplasmic vesicle. It is found in the secretory vesicle. With respect to regulation, inhibited by aminohydantoin compounds such as CWHM-117. Functionally, during the asexual blood stage, processes key proteins essential for merozoite egress and invasion of host erythrocytes. Cleaves and activates proteases SUB1 and SUB2. May process members of the EBL and Rh protein families. Also cleaves apical membrane protein AMA1. During the mosquito vector stage and probably in ookinetes, cleaves CelTOS. The chain is Plasmepsin X from Plasmodium falciparum (isolate NF54).